The chain runs to 729 residues: Hydroxamate siderophore receptor FhuE (729 aa).

A signal peptide spans 1-36 (MLSTQFNRDNQYQAITKPSLLAGCIALALLPSAAFA). The TonB box signature appears at 42–49 (ETVIVEGS). The interval 48-72 (GSATAPDDGENDYSVTSTSAGTKMQ) is disordered. The segment covering 60–72 (YSVTSTSAGTKMQ) has biased composition (polar residues). In terms of domain architecture, TBDR plug spans 74-183 (TQRDIPQSVT…PSAAINMVRK (110 aa)). Residues R117, R142, W275, Y357, N373, and W416 each contribute to the Fe(III)-coprogen site. Positions 189-729 (EFKGDVSAEY…NFSITGTYQF (541 aa)) constitute a TBDR beta-barrel domain. Residues 712–729 (SIVYGTPRNFSITGTYQF) carry the TonB C-terminal box motif.

This sequence belongs to the TonB-dependent receptor family.

The protein localises to the cell outer membrane. Functionally, involved in the active transport across the outer membrane of iron complexed with linear hydroxamate siderophores coprogen, rhodotorulic acid and ferrioxamine B. Binds Fe-coprogen with high affinity, rhodotorulic acid to a lesser extent, and weakly to ferrioxamine B. Selective for planar siderophores. Does not use cyclic siderophores ferrichrome nor ferrioxamine E as substrates. This Escherichia coli (strain K12) protein is Hydroxamate siderophore receptor FhuE.